Here is a 1778-residue protein sequence, read N- to C-terminus: Ankyrin repeat domain-containing protein 36C (1778 aa).

ANK repeat units lie at residues 64–93, 97–126, 130–159, 163–192, and 196–225; these read KERT…ELNL, EDRT…DPNI, FGRT…NIEE, DEYP…NINA, and LGRS…DVFS. 5 disordered regions span residues 260-365, 501-526, 538-653, 671-1027, and 1051-1072; these read LSIN…DEQK, ALPA…VKDS, DSLT…QKQS, RITG…QKQL, and IRGT…EKDS. 2 stretches are compositionally biased toward polar residues: residues 261-272 and 297-306; these read SINSNPVSSQKQ and KSGTVSSQKQ. The span at 539-555 shows a compositional bias: low complexity; the sequence is SLTSSEESSERPPLSTL. Composition is skewed to basic and acidic residues over residues 585 to 596 and 619 to 630; these read PAEKATSDDKDS and PAEKATSDEKDS. Polar residues-rich tracts occupy residues 631–653 and 679–691; these read VSNI…QKQS and GTVS…PSKA. The span at 794–813 shows a compositional bias: basic and acidic residues; the sequence is TSDEKDSFSNITREKKDGEI. Serine 829 is modified (phosphoserine). Basic and acidic residues-rich tracts occupy residues 840–849 and 862–881; these read RGKEDGEKTR and TSDE…DGET. Serine 897 is modified (phosphoserine). Residues 907–917 are compositionally biased toward basic and acidic residues; the sequence is AREKKDGEKSR. Positions 942–955 are enriched in basic residues; the sequence is RGKKHGEKTRRVSS. Composition is skewed to polar residues over residues 983 to 992 and 1005 to 1026; these read ISGTVSSQKQ and VSNI…SQKQ. 4 coiled-coil regions span residues 1157–1187, 1247–1333, 1362–1480, and 1544–1768; these read EQDL…QIHS, ELKD…YRIE, SETD…DHDQ, and VFEH…ILQH.

This sequence belongs to the ANKRD36 family.

The chain is Ankyrin repeat domain-containing protein 36C (ANKRD36C) from Homo sapiens (Human).